Here is a 457-residue protein sequence, read N- to C-terminus: Acetylcholine receptor subunit alpha-1-A (457 aa).

An N-terminal signal peptide occupies residues 1–20 (MDFVLTRLILLFLAATIIYS). The Extracellular portion of the chain corresponds to 21 to 230 (SEDESRLIND…ITYHFLLQRL (210 aa)). 2 cysteine pairs are disulfide-bonded: C148/C162 and C212/C213. N161 is a glycosylation site (N-linked (GlcNAc...) asparagine). A run of 3 helical transmembrane segments spans residues 231–255 (PLYF…VFYL), 263–281 (ITLS…LVIV), and 297–316 (YMLF…VIVI). Over 317–428 (NTHHRSPSTH…WKFVAMVLDH (112 aa)) the chain is Cytoplasmic. The chain crosses the membrane as a helical span at residues 429–447 (LLLAVFMIVCIIGTLAIFA).

This sequence belongs to the ligand-gated ion channel (TC 1.A.9) family. Acetylcholine receptor (TC 1.A.9.1) subfamily. Alpha-1/CHRNA1 sub-subfamily. One of the alpha chains that assemble within the acetylcholine receptor, a pentamer of two alpha chains, a beta, a delta, and a gamma or epsilon chains. Oocytes.

The protein resides in the postsynaptic cell membrane. The protein localises to the cell membrane. The enzyme catalyses K(+)(in) = K(+)(out). It carries out the reaction Na(+)(in) = Na(+)(out). Its function is as follows. Upon acetylcholine binding, the AChR responds by an extensive change in conformation that affects all subunits and leads to opening of an ion-conducting channel across the plasma membrane. The sequence is that of Acetylcholine receptor subunit alpha-1-A (chrna1-a) from Xenopus laevis (African clawed frog).